The following is a 694-amino-acid chain: Voltage-gated chloride channel TMC4 (694 aa).

The disordered stretch occupies residues methionine 1–serine 21. Residues methionine 1–arginine 150 lie on the Extracellular side of the membrane. A helical membrane pass occupies residues phenylalanine 151–threonine 171. Over tryptophan 172–asparagine 231 the chain is Cytoplasmic. Residues leucine 232 to leucine 252 form a helical membrane-spanning segment. The Extracellular portion of the chain corresponds to arginine 253 to arginine 330. A helical membrane pass occupies residues alanine 331 to alanine 351. The Cytoplasmic portion of the chain corresponds to threonine 352 to tyrosine 376. The helical transmembrane segment at leucine 377 to alanine 397 threads the bilayer. The Extracellular segment spans residues serine 398–glutamine 407. The helical transmembrane segment at isoleucine 408–valine 428 threads the bilayer. Topologically, residues serine 429–glutamate 465 are cytoplasmic. Residues methionine 466 to phenylalanine 486 traverse the membrane as a helical segment. The Extracellular segment spans residues proline 487 to glutamate 513. A helical transmembrane segment spans residues valine 514–leucine 534. Proline 535 is a topological domain (cytoplasmic). A helical membrane pass occupies residues leucine 536–isoleucine 556. The Extracellular portion of the chain corresponds to tyrosine 557 to proline 574. Residues leucine 575 to isoleucine 595 traverse the membrane as a helical segment. Topologically, residues proline 596–glutamine 635 are cytoplasmic. The helical transmembrane segment at alanine 636–alanine 656 threads the bilayer. The Extracellular portion of the chain corresponds to asparagine 657 to serine 694. A glycan (N-linked (GlcNAc...) asparagine) is linked at asparagine 691.

Belongs to the TMC family. Expressed in taste bud cells of the posterior tongue. Ubiquitously expressed.

The protein localises to the membrane. The catalysed reaction is chloride(in) = chloride(out). Functionally, voltage-gated chloride channel involved in high-concentration salt taste sensation. Depolarization induced by high NaCl concentration may trigger the activation of TMC4-mediated chloride influx into taste bud cells, helping the return to resting potential. Also allows permeation of organic anions including gluconate, but their current amplitudes at positive potentials are less than that of chloride. Involved in pH and temperature-dependent modulation of salty taste. The chain is Voltage-gated chloride channel TMC4 from Mus musculus (Mouse).